The sequence spans 1029 residues: Error-prone DNA polymerase (1029 aa).

The protein belongs to the DNA polymerase type-C family. DnaE2 subfamily.

It localises to the cytoplasm. It carries out the reaction DNA(n) + a 2'-deoxyribonucleoside 5'-triphosphate = DNA(n+1) + diphosphate. Its function is as follows. DNA polymerase involved in damage-induced mutagenesis and translesion synthesis (TLS). It is not the major replicative DNA polymerase. In Saccharophagus degradans (strain 2-40 / ATCC 43961 / DSM 17024), this protein is Error-prone DNA polymerase.